A 438-amino-acid chain; its full sequence is MELATRSQIPKEVADIFSAPSDDEEFVGFQDDVPMQNLSESCGSLDSRELEKQQNVCFRSKYFTEELRRIFKEDTDSEMEDFEGFTESELNMSSNPELMESELSDSDKAYPVMNDAEEDDEEEAAPRRGRSTRRSSFGLRVAFQFPTKKLARTPDKDSSHLLDSKTDLRRKKSSRQPKGKEDSASDAEDESRAESQENSDALLKRAMNIKENKAMLAQLLAELNSVPDFFPVRTPPSASRRRTPRRAFSEGQITRRMNPTRSARPPEKFALENFTFSATKLTEELYSFRRRKTISGGKCQTYRRHRISSFRSVKDITEEDLENIAITVRDKVYDKVLGNTCHQCRQKTIDTKTVCRNQSCGGVRGQFCGPCLRNRYGEDVRTALLDPKWTCPPCRGICNCSYCRRRDGRCATGILIHLAKFYGYDNVKEYLESLQKQL.

Positions 9-33 match the Integrase domain-binding motif 1 (IBM1) motif; it reads IPKEVADIFSAPSDDEEFVGFQDDV. Phosphoserine is present on Ser21. Residues 56-115 form a PSIP1-binding region; sequence VCFRSKYFTEELRRIFKEDTDSEMEDFEGFTESELNMSSNPELMESELSDSDKAYPVMND. Positions 63 to 89 match the Integrase domain-binding motif 2 (IBM2) motif; the sequence is FTEELRRIFKEDTDSEMEDFEGFTESE. Residues 74–199 are disordered; it reads DTDSEMEDFE…ESRAESQENS (126 aa). Thr75 carries the phosphothreonine modification. The segment covering 75 to 86 has biased composition (acidic residues); it reads TDSEMEDFEGFT. Residue Ser77 is modified to Phosphoserine. At Thr86 the chain carries Phosphothreonine. Residues Ser101, Ser104, Ser135, Ser136, and Ser159 each carry the phosphoserine modification. Basic and acidic residues predominate over residues 152-167; that stretch reads RTPDKDSSHLLDSKTD. The segment covering 168–177 has biased composition (basic residues); it reads LRRKKSSRQP. Phosphoserine occurs at positions 183 and 185. An MYC-binding region spans residues 201–223; it reads ALLKRAMNIKENKAMLAQLLAEL. Glycyl lysine isopeptide (Lys-Gly) (interchain with G-Cter in SUMO2) cross-links involve residues Lys210 and Lys213. Ser249 is subject to Phosphoserine.

As to quaternary structure, interacts with MYC. Interacts (via IBM motifs) with PSIP1 (via IBD domain); phosphorylation increases its affinity for PSIP1. In terms of processing, phosphorylation increases its interaction with PSIP1. As to expression, expressed in all tissues but not detected in total brain.

Its subcellular location is the cytoplasm. It localises to the nucleus. Plays a role in transcriptional regulation as a repressor that inhibits monoamine oxidase A (MAOA) activity and gene expression by binding to the promoter. Plays an important oncogenic role in mediating the full transforming effect of MYC in medulloblastoma cells. Involved in apoptotic signaling pathways; May act downstream of P38-kinase and BCL-2, but upstream of CASP3/caspase-3 as well as CCND1/cyclin D1 and E2F1. This is Cell division cycle-associated 7-like protein (Cdca7l) from Mus musculus (Mouse).